The chain runs to 406 residues: Bifunctional enzyme IspD/IspF (406 aa).

The segment at 1 to 246 is 2-C-methyl-D-erythritol 4-phosphate cytidylyltransferase; it reads MTQMHSTQPM…KLSAGLLPDV (246 aa). The tract at residues 247 to 406 is 2-C-methyl-D-erythritol 2,4-cyclodiphosphate synthase; the sequence is RTGNGYDVHQ…ATVVYRGGRP (160 aa). The a divalent metal cation site is built by aspartate 253 and histidine 255. Residues 253–255 and 279–280 contribute to the 4-CDP-2-C-methyl-D-erythritol 2-phosphate site; these read DVH and HS. Histidine 287 is a binding site for a divalent metal cation. 4-CDP-2-C-methyl-D-erythritol 2-phosphate contacts are provided by residues 301-303, 377-380, phenylalanine 384, and arginine 387; these read DIG and TTNE.

It in the N-terminal section; belongs to the IspD/TarI cytidylyltransferase family. IspD subfamily. The protein in the C-terminal section; belongs to the IspF family. The cofactor is a divalent metal cation.

It catalyses the reaction 2-C-methyl-D-erythritol 4-phosphate + CTP + H(+) = 4-CDP-2-C-methyl-D-erythritol + diphosphate. The catalysed reaction is 4-CDP-2-C-methyl-D-erythritol 2-phosphate = 2-C-methyl-D-erythritol 2,4-cyclic diphosphate + CMP. It participates in isoprenoid biosynthesis; isopentenyl diphosphate biosynthesis via DXP pathway; isopentenyl diphosphate from 1-deoxy-D-xylulose 5-phosphate: step 2/6. The protein operates within isoprenoid biosynthesis; isopentenyl diphosphate biosynthesis via DXP pathway; isopentenyl diphosphate from 1-deoxy-D-xylulose 5-phosphate: step 4/6. In terms of biological role, bifunctional enzyme that catalyzes the formation of 4-diphosphocytidyl-2-C-methyl-D-erythritol from CTP and 2-C-methyl-D-erythritol 4-phosphate (MEP) (IspD), and catalyzes the conversion of 4-diphosphocytidyl-2-C-methyl-D-erythritol 2-phosphate (CDP-ME2P) to 2-C-methyl-D-erythritol 2,4-cyclodiphosphate (ME-CPP) with a corresponding release of cytidine 5-monophosphate (CMP) (IspF). The protein is Bifunctional enzyme IspD/IspF of Rhizobium rhizogenes (strain K84 / ATCC BAA-868) (Agrobacterium radiobacter).